Here is a 72-residue protein sequence, read N- to C-terminus: Translation initiation factor IF-1 (72 aa).

The S1-like domain occupies 1-72; the sequence is MAKEDVIEIE…TRGRITYRFK (72 aa).

The protein belongs to the IF-1 family. Component of the 30S ribosomal translation pre-initiation complex which assembles on the 30S ribosome in the order IF-2 and IF-3, IF-1 and N-formylmethionyl-tRNA(fMet); mRNA recruitment can occur at any time during PIC assembly.

The protein resides in the cytoplasm. In terms of biological role, one of the essential components for the initiation of protein synthesis. Stabilizes the binding of IF-2 and IF-3 on the 30S subunit to which N-formylmethionyl-tRNA(fMet) subsequently binds. Helps modulate mRNA selection, yielding the 30S pre-initiation complex (PIC). Upon addition of the 50S ribosomal subunit IF-1, IF-2 and IF-3 are released leaving the mature 70S translation initiation complex. This is Translation initiation factor IF-1 from Streptococcus suis (strain 05ZYH33).